The following is a 220-amino-acid chain: Deoxyribose-phosphate aldolase (220 aa).

Catalysis depends on Asp89, which acts as the Proton donor/acceptor. The Schiff-base intermediate with acetaldehyde role is filled by Lys151. The active-site Proton donor/acceptor is Lys180.

Belongs to the DeoC/FbaB aldolase family. DeoC type 1 subfamily.

The protein resides in the cytoplasm. The catalysed reaction is 2-deoxy-D-ribose 5-phosphate = D-glyceraldehyde 3-phosphate + acetaldehyde. The protein operates within carbohydrate degradation; 2-deoxy-D-ribose 1-phosphate degradation; D-glyceraldehyde 3-phosphate and acetaldehyde from 2-deoxy-alpha-D-ribose 1-phosphate: step 2/2. Its function is as follows. Catalyzes a reversible aldol reaction between acetaldehyde and D-glyceraldehyde 3-phosphate to generate 2-deoxy-D-ribose 5-phosphate. The chain is Deoxyribose-phosphate aldolase from Streptococcus pneumoniae serotype 4 (strain ATCC BAA-334 / TIGR4).